A 103-amino-acid polypeptide reads, in one-letter code: Small ribosomal subunit protein uS10 (103 aa).

This sequence belongs to the universal ribosomal protein uS10 family. In terms of assembly, part of the 30S ribosomal subunit.

In terms of biological role, involved in the binding of tRNA to the ribosomes. The polypeptide is Small ribosomal subunit protein uS10 (Stenotrophomonas maltophilia (strain R551-3)).